Here is a 200-residue protein sequence, read N- to C-terminus: Recombination protein RecR (200 aa).

Residues 57–72 form a C4-type zinc finger; sequence CERCRNYAQSTLCPVC. The Toprim domain occupies 80-175; it reads SLVCIVATPG…GVSRIAQGVP (96 aa).

This sequence belongs to the RecR family.

In terms of biological role, may play a role in DNA repair. It seems to be involved in an RecBC-independent recombinational process of DNA repair. It may act with RecF and RecO. This chain is Recombination protein RecR, found in Alcanivorax borkumensis (strain ATCC 700651 / DSM 11573 / NCIMB 13689 / SK2).